The primary structure comprises 212 residues: 3-isopropylmalate dehydratase small subunit (212 aa).

The protein belongs to the LeuD family. LeuD type 1 subfamily. As to quaternary structure, heterodimer of LeuC and LeuD.

It catalyses the reaction (2R,3S)-3-isopropylmalate = (2S)-2-isopropylmalate. It functions in the pathway amino-acid biosynthesis; L-leucine biosynthesis; L-leucine from 3-methyl-2-oxobutanoate: step 2/4. In terms of biological role, catalyzes the isomerization between 2-isopropylmalate and 3-isopropylmalate, via the formation of 2-isopropylmaleate. In Beutenbergia cavernae (strain ATCC BAA-8 / DSM 12333 / CCUG 43141 / JCM 11478 / NBRC 16432 / NCIMB 13614 / HKI 0122), this protein is 3-isopropylmalate dehydratase small subunit.